A 624-amino-acid polypeptide reads, in one-letter code: Kelch-like ECH-associated protein 1 (624 aa).

The interval 1–27 (MQPEPRPSGAGAHTQFLPLRSQRPEGA) is disordered. Cys-38 is modified (S-(2-succinyl)cysteine). The 73-residue stretch at 77–149 (CDVTLQVKYE…AYTASISMGE (73 aa)) folds into the BTB domain. Residue Arg-135 forms an N5-[4-(S-L-cysteinyl)-5-methyl-1H-imidazol-2-yl]-L-ornithine (Arg-Cys) (interchain with C-151 in KEAP1) linkage. 2 positions are modified to S-(2-succinyl)cysteine: Cys-151 and Cys-241. Cys-151 is modified (S-(2,3-dicarboxypropyl)cysteine; alternate). Cys-151 is subject to S-nitrosocysteine; alternate. Cys-151 participates in a covalent cross-link: N5-[4-(S-L-cysteinyl)-5-methyl-1H-imidazol-2-yl]-L-ornithine (Cys-Arg) (interchain with R-135 in KEAP1). The region spanning 184–286 (AIGIANFAEQ…TPHFLQMQLQ (103 aa)) is the BACK domain. S-(2,3-dicarboxypropyl)cysteine is present on residues Cys-257 and Cys-273. Residues Cys-288 and Cys-319 each carry the S-(2-succinyl)cysteine modification. Cys-288 carries the post-translational modification S-(2,3-dicarboxypropyl)cysteine; alternate. Kelch repeat units follow at residues 327-372 (LIYT…VVGG), 373-423 (LLYA…VIDG), 424-470 (HIYA…VLNR), 471-517 (LLYA…VLHN), 519-564 (IYAA…VHQG), and 565-611 (RIYV…VTME). Residue Cys-434 is modified to S-cGMP-cysteine. Residue Cys-613 is modified to S-(2-succinyl)cysteine.

It belongs to the KEAP1 family. As to quaternary structure, component of the BCR(KEAP1) E3 ubiquitin ligase complex, at least composed of 2 molecules of CUL3, 2 molecules of KEAP1, and RBX1. Interacts with NFE2L2/NRF2; the interaction is direct. Forms a ternary complex with NFE2L2/NRF2 and PGAM5. Interacts with (phosphorylated) SQSTM1/p62; the interaction is direct and inactivates the BCR(KEAP1) complex by sequestering it in inclusion bodies, promoting its degradation. Interacts with NFE2L1. Interacts with BPTF and PTMA. Interacts with MAP1LC3B. Interacts indirectly with ENC1. Interacts with SESN1 and SESN2. Interacts with HSP90AA1 and HSP90AB1. Interacts with PGCKA1; this interaction prevents the ubiquitination of KEAP1 by TRIM25, thus protecting KEAP1 protein from degradation. In terms of processing, non-enzymatic covalent modifications of reactive cysteines by electrophile metabolites inactivate the BCR(KEAP1) complex. Accumulation of fumarate promotes the formation of cysteine S-succination (S-(2-succinyl)cysteine), leading to inactivate the BCR(KEAP1) complex and promote NFE2L2/NRF2 nuclear accumulation and activation. Nitric oxide-dependent 8-Nitro-cGMP formation promotes cysteine guanylation (S-cGMP-cysteine), leading to NFE2L2/NRF2 nuclear accumulation and activation. Itaconate, an anti-inflammatory metabolite generated in response to lipopolysaccharide, alkylates cysteines, activating NFE2L2/NRF2. Methylglyoxal, a reactive metabolite that accumulates when the glycolytic enzyme PGK1 is inhibited, promotes formation of a methylimidazole cross-link between proximal Cys-151 and Arg-135 on another KEAP1 molecule, resulting in an inactive dimer that inactivates the BCR(KEAP1) complex. Degraded via a proteasomal-independent process during selective autophagy: interaction with phosphorylated SQSTM1/p62 sequesters KEAP1 in inclusion bodies, leading to its degradation. Post-translationally, auto-ubiquitinated by the BCR(KEAP1) complex. Quinone-induced oxidative stress, but not sulforaphane, increases its ubiquitination. Ubiquitination and subsequent degradation is most pronounced following prolonged exposure of cells to oxidative stress, particularly in glutathione-deficient cells that are highly susceptible to oxidative stress. Deubiquitinated by USP25; leading to stabilization. Ubiquitinated by TRIM25; leading to degradation upon ER stress.

It is found in the cytoplasm. It localises to the nucleus. It functions in the pathway protein modification; protein ubiquitination. With respect to regulation, ubiquitin ligase activity of the BCR(KEAP1) complex is inhibited by oxidative stress and electrophile metabolites such as sulforaphane. Electrophile metabolites react with reactive cysteine residues in KEAP1 and trigger non-enzymatic covalent modifications of these cysteine residues, leading to inactivate the ubiquitin ligase activity of the BCR(KEAP1) complex. Selective autophagy also inactivates the BCR(KEAP1) complex via interaction between KEAP1 and SQSTM1/p62, which sequesters the complex in inclusion bodies and promotes its degradation. Functionally, substrate-specific adapter of a BCR (BTB-CUL3-RBX1) E3 ubiquitin ligase complex that regulates the response to oxidative stress by targeting NFE2L2/NRF2 for ubiquitination. KEAP1 acts as a key sensor of oxidative and electrophilic stress: in normal conditions, the BCR(KEAP1) complex mediates ubiquitination and degradation of NFE2L2/NRF2, a transcription factor regulating expression of many cytoprotective genes. In response to oxidative stress, different electrophile metabolites trigger non-enzymatic covalent modifications of highly reactive cysteine residues in KEAP1, leading to inactivate the ubiquitin ligase activity of the BCR(KEAP1) complex, promoting NFE2L2/NRF2 nuclear accumulation and expression of phase II detoxifying enzymes. In response to selective autophagy, KEAP1 is sequestered in inclusion bodies following its interaction with SQSTM1/p62, leading to inactivation of the BCR(KEAP1) complex and activation of NFE2L2/NRF2. The BCR(KEAP1) complex also mediates ubiquitination of SQSTM1/p62, increasing SQSTM1/p62 sequestering activity and degradation. The BCR(KEAP1) complex also targets BPTF and PGAM5 for ubiquitination and degradation by the proteasome. The sequence is that of Kelch-like ECH-associated protein 1 from Sus scrofa (Pig).